The chain runs to 454 residues: SH2 domain-containing protein 4A (454 aa).

Disordered regions lie at residues 45–65 (AMER…NGKS), 107–131 (EQEA…KSQY), 152–177 (KEEL…SSSS), and 237–302 (RKSK…AYPQ). Over residues 107 to 120 (EQEAEEPRKTHSEE) the composition is skewed to basic and acidic residues. Phosphoserine is present on residues S118 and S124. Basic and acidic residues predominate over residues 240–259 (KAADEKRRSLAKQAREDYKR). Phosphoserine is present on residues S261 and S315. The SH2 domain maps to 347–440 (WFHGILTLKK…LGKELLLYPC (94 aa)).

Interacts with ESR1. As to expression, ubiquitously expressed. Aberrantly expressed in some cancers.

It is found in the cytoplasm. In terms of biological role, inhibits estrogen-induced cell proliferation by competing with PLCG for binding to ESR1, blocking the effect of estrogen on PLCG and repressing estrogen-induced proliferation. May play a role in T-cell development and function. This Homo sapiens (Human) protein is SH2 domain-containing protein 4A (SH2D4A).